A 393-amino-acid polypeptide reads, in one-letter code: MSNQKHIVLAGGGTAGHVNPLLAVAHVIRELEPEADIAVVGTAVGLERDLVPQAGFELETIEKVPFPRRPNKAALQFPAKWKAEKAKVRDILTRHQAQVVVGFGGYTSAPVYAAAHSMGIPIAIHEQNARAGMANKLGARWASMIGAAYAQPGLKPRRGVEVERVGLPLRPAIARLASDLEHDRTATRKAAAAQLGVDPDRPLVVITGGSLGAVNVNRAVAASAKDLLAHAQVIHLTGKGKDDEVRSLVSVSAGEDVLGELGPDHVSDGDYRVAPYLERIDLAFACADLIICRSGAGTVSELTALGLPAIYVPLPIGNGEQRFNAQPVVDAEGGLMVADGDFTPDWVRGHVPELLADPDKLSRYGANAWKYGIRDAAEVMAKRVLALIDQPAD.

Residues 14–16, Asn-128, Arg-170, Ser-210, and Gln-321 each bind UDP-N-acetyl-alpha-D-glucosamine; that span reads TAG.

It belongs to the glycosyltransferase 28 family. MurG subfamily.

The protein localises to the cell membrane. The catalysed reaction is di-trans,octa-cis-undecaprenyl diphospho-N-acetyl-alpha-D-muramoyl-L-alanyl-D-glutamyl-meso-2,6-diaminopimeloyl-D-alanyl-D-alanine + UDP-N-acetyl-alpha-D-glucosamine = di-trans,octa-cis-undecaprenyl diphospho-[N-acetyl-alpha-D-glucosaminyl-(1-&gt;4)]-N-acetyl-alpha-D-muramoyl-L-alanyl-D-glutamyl-meso-2,6-diaminopimeloyl-D-alanyl-D-alanine + UDP + H(+). It functions in the pathway cell wall biogenesis; peptidoglycan biosynthesis. In terms of biological role, cell wall formation. Catalyzes the transfer of a GlcNAc subunit on undecaprenyl-pyrophosphoryl-MurNAc-pentapeptide (lipid intermediate I) to form undecaprenyl-pyrophosphoryl-MurNAc-(pentapeptide)GlcNAc (lipid intermediate II). In Bifidobacterium adolescentis (strain ATCC 15703 / DSM 20083 / NCTC 11814 / E194a), this protein is UDP-N-acetylglucosamine--N-acetylmuramyl-(pentapeptide) pyrophosphoryl-undecaprenol N-acetylglucosamine transferase.